The chain runs to 105 residues: Chloroacetanilide N-alkylformylase 2, ferredoxin component (105 aa).

The 104-residue stretch at 2-105 (PKLVVVTREG…GLTVTIAPED (104 aa)) folds into the 2Fe-2S ferredoxin-type domain. [2Fe-2S] cluster is bound by residues Cys-40, Cys-46, Cys-49, and Cys-86.

This sequence belongs to the adrenodoxin/putidaredoxin family. In terms of assembly, the chloroacetanilide N-alkylformylase multicomponent enzyme system is composed of an oxygenase component (CndA) and an electron transfer component formed by a ferredoxin reductase (CndC1) and a ferredoxin (CndB1). In vitro, chloroacetanilide N-alkylformylase assays in which CndB1 is substituted for CndB2 demonstrate that the two enzymes possess nearly identical activities. It depends on [2Fe-2S] cluster as a cofactor.

Functionally, component of the chloroacetanilide N-alkylformylase multicomponent enzyme system involved in the degradation of chloroacetanilide herbicides (N-alkoxyalkyl-N-chloroacetyl-substituted aniline derivatives). In vitro, functions as an intermediate electron transfer protein. In Rhizorhabdus wittichii (strain DC-6 / KACC 16600) (Sphingomonas wittichii), this protein is Chloroacetanilide N-alkylformylase 2, ferredoxin component.